The sequence spans 482 residues: Cysteine--tRNA ligase (482 aa).

Cys29 is a Zn(2+) binding site. The 'HIGH' region signature appears at Val31 to His41. Positions 213, 238, and 242 each coordinate Zn(2+). Residues Lys275–Ser279 carry the 'KMSKS' region motif. Lys278 is a binding site for ATP.

The protein belongs to the class-I aminoacyl-tRNA synthetase family. As to quaternary structure, monomer. The cofactor is Zn(2+).

The protein localises to the cytoplasm. It catalyses the reaction tRNA(Cys) + L-cysteine + ATP = L-cysteinyl-tRNA(Cys) + AMP + diphosphate. The sequence is that of Cysteine--tRNA ligase from Gloeobacter violaceus (strain ATCC 29082 / PCC 7421).